The sequence spans 446 residues: StAR-related lipid transfer protein 3 (446 aa).

Over 1 to 52 (MSKRPGDLACDLERSLPALASLGTSLSHSQSLSSHFIPPPLEKRRAISDVRR) the chain is Cytoplasmic. Residues 47 to 218 (ISDVRRTFCL…YSPPESFAGS (172 aa)) form the MENTAL domain. Residues 53–73 (TFCLFVTFDLLFISLLWIIEL) form a helical membrane-spanning segment. Over 74 to 95 (NTNTGIRKNLEQEVIHYSFQSS) the chain is Extracellular. A helical membrane pass occupies residues 96–116 (FFDIFVLAFFRFSGLLLGYAV). The Cytoplasmic portion of the chain corresponds to 117–121 (LRLQH). A helical transmembrane segment spans residues 122–142 (WWVIAVTTLVSSAFLIVKVIL). Over 143-149 (SELLSKG) the chain is Extracellular. The helical transmembrane segment at 150-170 (AFGYLLPIVSFVLAWLETWFL) threads the bilayer. Over 171-446 (DFKVLPQEAE…QRVGELGARA (276 aa)) the chain is Cytoplasmic. Residues 207–213 (QFYSPPE) carry the FFAT motif. Serine 210, serine 218, and serine 222 each carry phosphoserine. Positions 231-444 (SFSAQEREYI…LRQRVGELGA (214 aa)) constitute an START domain.

It belongs to the STARD3 family. Homodimer. Interacts (via the MENTAL domain) with STARD3NL. Interacts (via phosphorylated FFAT motif) with VAPA (via MSP domain). Interacts (via phosphorylated FFAT motif) with VAPB (via MSP domain). Interacts (via phosphorylated FFAT motif) with MOSPD2 (via MSP domain); this interaction allows enrichment of MOSPD2 around endosomes. Phosphorylation at Ser-210 is necessary and sufficient for the direct interaction of the phosphorylated FFAT motif with the MSP domain of MOSPD2, VAPA and VAPB and allows the tethering of two membranes that participates in the formation of ER-endosome contacts. Phosphorylation of the FFAT motif leads to conformation changes. Additional phosphorylations around the core FFAT motif (QFYSPPE) are not essential but strengthen the interaction with MOSPD2, VAPA and VAPB. Phosphorylation at Ser-210 of FFAT motif drives membrane tethering between the endoplasmic reticulum and late endosomes via interaction with VAPA and VAPB that in turn allows the efficient transport of sterol mediated by the START domain.

Its subcellular location is the late endosome membrane. It carries out the reaction cholesterol(in) = cholesterol(out). Functionally, sterol-binding protein that mediates cholesterol transport from the endoplasmic reticulum to endosomes. The sterol transport mechanism is triggered by phosphorylation of FFAT motif that leads to membrane tethering between the endoplasmic reticulum and late endosomes via interaction with VAPA and VAPB. Acts as a lipid transfer protein that redirects sterol to the endosome at the expense of the cell membrane and favors membrane formation inside endosomes. May also mediate cholesterol transport between other membranes, such as mitochondria membrane or cell membrane. However, such results need additional experimental evidences; probably mainly mediates cholesterol transport from the endoplasmic reticulum to endosomes. Does not activate transcriptional cholesterol sensing. Able to bind other lipids, such as lutein, a xanthophyll carotenoids that form the macular pigment of the retina. The sequence is that of StAR-related lipid transfer protein 3 from Mus musculus (Mouse).